The sequence spans 118 residues: MGSFSYTKEQRLRKRPQFLALGERGKRVQNAYFIAVFAPAQGKVSRLGVTVTKKVGDAVTRNRIKRCVREYFRLNQHRLKAPVDINVIAKKACCQQESPLLAASLDHLFNRVSEGSRH.

It belongs to the RnpA family. Consists of a catalytic RNA component (M1 or rnpB) and a protein subunit.

It catalyses the reaction Endonucleolytic cleavage of RNA, removing 5'-extranucleotides from tRNA precursor.. Functionally, RNaseP catalyzes the removal of the 5'-leader sequence from pre-tRNA to produce the mature 5'-terminus. It can also cleave other RNA substrates such as 4.5S RNA. The protein component plays an auxiliary but essential role in vivo by binding to the 5'-leader sequence and broadening the substrate specificity of the ribozyme. The polypeptide is Ribonuclease P protein component (Desulfatibacillum aliphaticivorans).